We begin with the raw amino-acid sequence, 190 residues long: Pyridoxal 5'-phosphate synthase subunit PdxT (190 aa).

Residue 46 to 48 coordinates L-glutamine; it reads GES. Cys-78 acts as the Nucleophile in catalysis. L-glutamine contacts are provided by residues Arg-106 and 135–136; that span reads IR. Active-site charge relay system residues include His-171 and Glu-173.

It belongs to the glutaminase PdxT/SNO family. In the presence of PdxS, forms a dodecamer of heterodimers. Only shows activity in the heterodimer.

The enzyme catalyses aldehydo-D-ribose 5-phosphate + D-glyceraldehyde 3-phosphate + L-glutamine = pyridoxal 5'-phosphate + L-glutamate + phosphate + 3 H2O + H(+). It carries out the reaction L-glutamine + H2O = L-glutamate + NH4(+). Its pathway is cofactor biosynthesis; pyridoxal 5'-phosphate biosynthesis. In terms of biological role, catalyzes the hydrolysis of glutamine to glutamate and ammonia as part of the biosynthesis of pyridoxal 5'-phosphate. The resulting ammonia molecule is channeled to the active site of PdxS. The sequence is that of Pyridoxal 5'-phosphate synthase subunit PdxT from Dictyoglomus turgidum (strain DSM 6724 / Z-1310).